The sequence spans 442 residues: tRNA-2-methylthio-N(6)-dimethylallyladenosine synthase (442 aa).

In terms of domain architecture, MTTase N-terminal spans R6–K122. Residues C15, C51, C85, C157, C161, and C164 each contribute to the [4Fe-4S] cluster site. One can recognise a Radical SAM core domain in the interval R143 to E373. A TRAM domain is found at R376–E439.

The protein belongs to the methylthiotransferase family. MiaB subfamily. In terms of assembly, monomer. [4Fe-4S] cluster serves as cofactor.

It is found in the cytoplasm. The enzyme catalyses N(6)-dimethylallyladenosine(37) in tRNA + (sulfur carrier)-SH + AH2 + 2 S-adenosyl-L-methionine = 2-methylsulfanyl-N(6)-dimethylallyladenosine(37) in tRNA + (sulfur carrier)-H + 5'-deoxyadenosine + L-methionine + A + S-adenosyl-L-homocysteine + 2 H(+). Catalyzes the methylthiolation of N6-(dimethylallyl)adenosine (i(6)A), leading to the formation of 2-methylthio-N6-(dimethylallyl)adenosine (ms(2)i(6)A) at position 37 in tRNAs that read codons beginning with uridine. The polypeptide is tRNA-2-methylthio-N(6)-dimethylallyladenosine synthase (Chlorobium limicola (strain DSM 245 / NBRC 103803 / 6330)).